The sequence spans 22 residues: Fuctinin-1 (22 aa).

Residues 1-22 (SASPGLPKGEKEQQEAIEHIDE) are disordered. Over residues 8-22 (KGEKEQQEAIEHIDE) the composition is skewed to basic and acidic residues.

This sequence to human SET/PHAPII protein. In terms of assembly, oligomer.

The protein resides in the cytoplasm. In terms of biological role, has a role in the physiological regulation of fucosylation processes. In Rattus norvegicus (Rat), this protein is Fuctinin-1.